Reading from the N-terminus, the 147-residue chain is Small ribosomal subunit protein bS6 (147 aa).

Positions 97 to 141 are enriched in basic and acidic residues; that stretch reads EEGPSAMMRKADRDRERDDRGGGFRGDREGGFRGDRGPRRPREEA. The tract at residues 97-147 is disordered; the sequence is EEGPSAMMRKADRDRERDDRGGGFRGDREGGFRGDRGPRRPREEAPAVVEE.

This sequence belongs to the bacterial ribosomal protein bS6 family.

Functionally, binds together with bS18 to 16S ribosomal RNA. The chain is Small ribosomal subunit protein bS6 from Nitrobacter hamburgensis (strain DSM 10229 / NCIMB 13809 / X14).